The primary structure comprises 166 residues: MVLASSTTSILCMLLPLLMLFHQGLQISDRGSDAHHLLRTLDCRTIALEILVKLPVSGLNNSDDKANLRNSTLRRVNLDEFLKSQEEFDSQDTTDIKSKLQKLKCCIPAAASDSVLPGVYNKDLDDFKKKLRFYVIHLKDLQPVSVSRPPQPTSSSDNFRPMTVEC.

Residues 1–27 (MVLASSTTSILCMLLPLLMLFHQGLQI) form the signal peptide. Disulfide bonds link C43/C106 and C105/C166. N-linked (GlcNAc...) asparagine glycans are attached at residues N60 and N70. Positions 145–166 (SVSRPPQPTSSSDNFRPMTVEC) are disordered.

Belongs to the IL-3 family. In terms of assembly, monomer. Activated T-cells, mast cells, natural killer cells.

The protein resides in the secreted. In terms of biological role, cytokine secreted predominantly by activated T-lymphocytes as well as mast cells and osteoblastic cells that controls the production and differentiation of hematopoietic progenitor cells into lineage-restricted cells. Also stimulates mature basophils, eosinophils, and monocytes to become functionally activated. In addition, plays an important role in neural cell proliferation and survival. Participates as well in bone homeostasis and inhibits osteoclast differentiation by preventing NF-kappa-B nuclear translocation and activation. Mechanistically, exerts its biological effects through a receptor composed of IL3RA subunit and a signal transducing subunit IL3RB. Receptor stimulation results in the rapid activation of JAK2 kinase activity leading to STAT5-mediated transcriptional program. Alternatively, contributes to cell survival under oxidative stress in non-hematopoietic systems by activating pathways mediated by PI3K/AKT and ERK. The protein is Interleukin-3 (Il3) of Rattus norvegicus (Rat).